A 346-amino-acid polypeptide reads, in one-letter code: UPF0283 membrane protein VIBHAR_01918 (346 aa).

The segment covering 1–17 has biased composition (basic and acidic residues); the sequence is MSELKQKQVFKEKVMHS. Positions 1–28 are disordered; that stretch reads MSELKQKQVFKEKVMHSEEEDVSPELNT. 2 consecutive transmembrane segments (helical) span residues 73–93 and 98–118; these read LFAT…ITAI and WLAL…LGAL.

This sequence belongs to the UPF0283 family.

The protein resides in the cell inner membrane. In Vibrio campbellii (strain ATCC BAA-1116), this protein is UPF0283 membrane protein VIBHAR_01918.